Here is a 121-residue protein sequence, read N- to C-terminus: Darcynin homolog (121 aa).

Belongs to the darcynin family.

In Streptomyces avermitilis (strain ATCC 31267 / DSM 46492 / JCM 5070 / NBRC 14893 / NCIMB 12804 / NRRL 8165 / MA-4680), this protein is Darcynin homolog.